The primary structure comprises 942 residues: Endoprotease bli-4 (942 aa).

The N-terminal stretch at 1–22 is a signal peptide; that stretch reads MRISIGRIAWQILAVLIAVAFT. The propeptide occupies 23–116; the sequence is IEHDSICDES…EQRPKKRVKR (94 aa). The Lumenal segment spans residues 117–871; the sequence is DYILLDNDVH…TLLIDSNKSS (755 aa). Ca(2+) is bound at residue D124. A disordered region spans residues 130–160; the sequence is PFRRSVLNRDGTRRAQRQQPQSPREIPSLPF. Residues 168-483 form the Peptidase S8 domain; that stretch reads QWYLHGGAVG…YGLIDGGALV (316 aa). N195 carries N-linked (GlcNAc...) asparagine glycosylation. The active-site Charge relay system is D202. Residue D203 coordinates substrate. Ca(2+)-binding residues include D211, D223, D228, and D230. A disordered region spans residues 211 to 242; it reads DLAANYDPLASTDINDHDDDPTPQNNGDNKHG. 238–239 contributes to the substrate binding site; the sequence is DN. H241 (charge relay system) is an active-site residue. Residues L252, N255, Q257, and G259 each contribute to the Ca(2+) site. Cystine bridges form between C258–C407 and C350–C380. Residues E283, 300–305, D311, and 339–342 each bind substrate; these read SWGPED and ASGN. Ca(2+) is bound at residue D305. Residue D348 coordinates Ca(2+). Substrate contacts are provided by D353 and Y355. E378 is a binding site for Ca(2+). Residue S415 is the Charge relay system of the active site. S415 provides a ligand contact to substrate. The 139-residue stretch at 491-629 folds into the P/Homo B domain; that stretch reads TVPEQHICTY…TLLLYGTADP (139 aa). Residues C498 and C527 are joined by a disulfide bond. N-linked (GlcNAc...) asparagine glycosylation occurs at N519. 3 FU repeats span residues 674–723, 725–777, and 804–850; these read NCHD…YYLD, DKCK…LVAD, and GKCD…STKS. N868 carries N-linked (GlcNAc...) asparagine glycosylation. A helical membrane pass occupies residues 872-892; the sequence is GFGLMFWIVVSLIAACGICAC. Residues 893 to 942 are Cytoplasmic-facing; the sequence is KKCASETKSSNVEYAPLAQYNATNGAINLGAHTDDEDDDEDEVFVNPQIV. The disordered stretch occupies residues 922 to 942; that stretch reads GAHTDDEDDDEDEVFVNPQIV. A compositionally biased stretch (acidic residues) spans 926 to 935; sequence DDEDDDEDEV.

The protein belongs to the peptidase S8 family. Furin subfamily. The cofactor is Ca(2+). As to expression, in larvae and adults, expressed in all hypodermal cells, vulva and ventral nerve cords. Most highly expressed isoform in the embryonic epidermis. In terms of tissue distribution, expressed primarily in the germline. As to expression, expressed primarily in pharyngeal epithelial cells.

It is found in the membrane. Functionally, serine endoprotease which cleaves proproteins at paired basic amino acids at the consensus RX(K/R)R motif. Involved in N-terminal processing of cuticle collagens and plays a role in cuticle biosynthesis. May cleave both sqt-3 and dpy-17 collagens to promote their secretion. Acts in ASEL sensory neurons to regulate high salt chemotaxis responses probably by cleaving insulin-like protein ins-6 into its mature and active form. Essential for embryonic and larval development. In terms of biological role, involved in cuticle biosynthesis but dispensable for larval development. The polypeptide is Endoprotease bli-4 (bli-4) (Caenorhabditis elegans).